The following is a 615-amino-acid chain: MKQLGEEHPLISTKRPRAKKRRSIAICAAVLTLIAFGFIRFVPKDILAGGWYEGEKDGLSALDNEEVRDMQTDGTTFELKHIFHRGTGSHNYMVHRRLDVTKEYLEAHSEELEELTTMQTSEVDESNLQDVYDAYDWPQAHTGKNPWTIKLQIRQSPTNGVVKRLKERHTPNFLDSYLAYALSVKGNPALLNKIELEWEDEHEIPIPDVKDRDTVVSLATISSNAYVKFPKDDKEKKRSDWIDVGDPWVPDENHTDINFGWADDGLRGHVFVSTDNKTVVIGIKGTSGAGLIGTGPEETTANDKLNDNLLFSCCCARVGYMWTTVCDCYQKAYTCDQDCLEKELMRQDRYYQATLDLYRNVSQLYDPSTTNIWVTGHSLGGALASLVGRTYGLPAVAFEAPGEMLATRRLHLPQPPGLPKHLENIWHFGNTADPIYMGVCNGVSSSCNVAGYAMETACHTAHQCVYDVVTDMGWRVNLLNHRIHTVIDDIILAYNDTPPCVQQPPCRDCFNWRFTSSDDNKNDEPPLPNPLHPKPPSTVRSSNMPHEQSPNASRSLSSLCTEPSCTSSFQSVSPSFSSQLPSHPSQNPQRCLRRTWYGRCSKWGHNSAAHHVSSI.

At 1–22 (MKQLGEEHPLISTKRPRAKKRR) the chain is on the cytoplasmic side. The chain crosses the membrane as a helical; Signal-anchor for type II membrane protein span at residues 23–43 (SIAICAAVLTLIAFGFIRFVP). Residues 44–615 (KDILAGGWYE…NSAAHHVSSI (572 aa)) lie on the Lumenal side of the membrane. 3 N-linked (GlcNAc...) asparagine glycosylation sites follow: Asn-253, Asn-276, and Asn-360. Residue Ser-378 is the Charge relay system of the active site. The segment at 520–559 (NKNDEPPLPNPLHPKPPSTVRSSNMPHEQSPNASRSLSSL) is disordered. A compositionally biased stretch (pro residues) spans 525–536 (PPLPNPLHPKPP). The segment covering 538–559 (TVRSSNMPHEQSPNASRSLSSL) has biased composition (polar residues). A glycan (N-linked (GlcNAc...) asparagine) is linked at Asn-551.

It belongs to the AB hydrolase superfamily. Lipase family. In terms of assembly, binds to both phosphatidylinositol (PI) and phosphatidylinositol 3,5-bisphosphate (PIP2).

It is found in the endosome. It localises to the multivesicular body membrane. The protein localises to the prevacuolar compartment membrane. The enzyme catalyses a triacylglycerol + H2O = a diacylglycerol + a fatty acid + H(+). In terms of biological role, lipase which is essential for lysis of subvacuolar cytoplasm to vacuole targeted bodies and intravacuolar autophagic bodies. Involved in the lysis of intravacuolar multivesicular body (MVB) vesicles. The intravacuolar membrane disintegration by ATG15 is critical to life span extension. This Debaryomyces hansenii (strain ATCC 36239 / CBS 767 / BCRC 21394 / JCM 1990 / NBRC 0083 / IGC 2968) (Yeast) protein is Putative lipase ATG15 (ATG15).